The chain runs to 1375 residues: DNA-directed RNA polymerase subunit beta (1375 aa).

This sequence belongs to the RNA polymerase beta chain family. The RNAP catalytic core consists of 2 alpha, 1 beta, 1 beta' and 1 omega subunit. When a sigma factor is associated with the core the holoenzyme is formed, which can initiate transcription.

The enzyme catalyses RNA(n) + a ribonucleoside 5'-triphosphate = RNA(n+1) + diphosphate. In terms of biological role, DNA-dependent RNA polymerase catalyzes the transcription of DNA into RNA using the four ribonucleoside triphosphates as substrates. In Methylorubrum populi (strain ATCC BAA-705 / NCIMB 13946 / BJ001) (Methylobacterium populi), this protein is DNA-directed RNA polymerase subunit beta.